We begin with the raw amino-acid sequence, 269 residues long: Tryptophan synthase alpha chain (269 aa).

Residues Glu-49 and Asp-60 each act as proton acceptor in the active site.

It belongs to the TrpA family. Tetramer of two alpha and two beta chains.

The enzyme catalyses (1S,2R)-1-C-(indol-3-yl)glycerol 3-phosphate + L-serine = D-glyceraldehyde 3-phosphate + L-tryptophan + H2O. It functions in the pathway amino-acid biosynthesis; L-tryptophan biosynthesis; L-tryptophan from chorismate: step 5/5. Functionally, the alpha subunit is responsible for the aldol cleavage of indoleglycerol phosphate to indole and glyceraldehyde 3-phosphate. The protein is Tryptophan synthase alpha chain of Proteus mirabilis (strain HI4320).